Consider the following 345-residue polypeptide: RNA polymerase II holoenzyme cyclin-like subunit (345 aa).

The 125-residue stretch at 23-147 (ESRRKLLLLE…KLAEFEFYLI (125 aa)) folds into the Cyclin N-terminal domain.

Belongs to the cyclin family. Cyclin C subfamily. Component of the SRB8-11 complex, a regulatory module of the Mediator complex.

The protein localises to the nucleus. Component of the SRB8-11 complex. The SRB8-11 complex is a regulatory module of the Mediator complex which is itself involved in regulation of basal and activated RNA polymerase II-dependent transcription. The SRB8-11 complex may be involved in the transcriptional repression of a subset of genes regulated by Mediator. It may inhibit the association of the Mediator complex with RNA polymerase II to form the holoenzyme complex. The SRB8-11 complex phosphorylates the C-terminal domain (CTD) of the largest subunit of RNA polymerase II. In Debaryomyces hansenii (strain ATCC 36239 / CBS 767 / BCRC 21394 / JCM 1990 / NBRC 0083 / IGC 2968) (Yeast), this protein is RNA polymerase II holoenzyme cyclin-like subunit (SSN8).